The sequence spans 130 residues: Small ribosomal subunit protein uS9 (130 aa).

It belongs to the universal ribosomal protein uS9 family.

The chain is Small ribosomal subunit protein uS9 from Citrobacter koseri (strain ATCC BAA-895 / CDC 4225-83 / SGSC4696).